The primary structure comprises 540 residues: Chaperonin GroEL (540 aa).

ATP contacts are provided by residues 29–32 (TIGP), 86–90 (DGTTT), G413, 477–479 (NAA), and D493.

This sequence belongs to the chaperonin (HSP60) family. In terms of assembly, forms a cylinder of 14 subunits composed of two heptameric rings stacked back-to-back. Interacts with the co-chaperonin GroES.

The protein localises to the cytoplasm. The enzyme catalyses ATP + H2O + a folded polypeptide = ADP + phosphate + an unfolded polypeptide.. In terms of biological role, together with its co-chaperonin GroES, plays an essential role in assisting protein folding. The GroEL-GroES system forms a nano-cage that allows encapsulation of the non-native substrate proteins and provides a physical environment optimized to promote and accelerate protein folding. The protein is Chaperonin GroEL of Lactobacillus helveticus (strain DPC 4571).